Reading from the N-terminus, the 282-residue chain is Endo-1,4-beta-xylanase B (282 aa).

The N-terminal stretch at 1-39 is a signal peptide; the sequence is MGISSILLSALIAGGALALPAAEPVSFDIRDENITLARR. The N-linked (GlcNAc...) asparagine glycan is linked to Asn33. The region spanning 40–219 is the GH11 domain; the sequence is AEAINYNQDY…GSGSGQISLS (180 aa). The active-site Nucleophile is Glu117. Glu206 (proton donor) is an active-site residue. The tract at residues 214–245 is disordered; that stretch reads GQISLSKGTGGGSTTTTPTGPTSTSTAPSSGG. Positions 227–243 are enriched in low complexity; it reads TTTTPTGPTSTSTAPSS. In terms of domain architecture, CBM1 spans 246 to 282; that stretch reads TGAAQWGQCGGIGWTGPTTCVAPYTCKYENAYYSQCQ.

It belongs to the glycosyl hydrolase 11 (cellulase G) family.

It is found in the secreted. It catalyses the reaction Endohydrolysis of (1-&gt;4)-beta-D-xylosidic linkages in xylans.. Its pathway is glycan degradation; xylan degradation. Its activity is regulated as follows. Significantly inhibited by the wheat xylanase inhibiting protein I (XIP-I) and the proteinaceous endoxylanase Triticum aestivum xylanase inhibitors I (TAXI-I), but not TAXI-II. Its function is as follows. Endo-1,4-beta-xylanase involved in the hydrolysis of xylan, a major structural heterogeneous polysaccharide found in plant biomass representing the second most abundant polysaccharide in the biosphere, after cellulose. This chain is Endo-1,4-beta-xylanase B (xynB), found in Talaromyces funiculosus (Fruitlet core rot fungus).